A 581-amino-acid chain; its full sequence is mRNA-decapping enzyme 1B (581 aa).

S145 is subject to Phosphoserine. Disordered regions lie at residues 181 to 222 and 236 to 258; these read QISS…PEPQ and APCQEATGPPQTLPLQQQQPEKF. Positions 204 to 219 are enriched in polar residues; that stretch reads GSRQQRGPRPGQTSDP. Positions 244 to 255 are enriched in low complexity; sequence PPQTLPLQQQQP. Residues S269 and S326 each carry the phosphoserine modification. The disordered stretch occupies residues 349–411; sequence AENRCEPGAP…HQPVTGPGEV (63 aa). Residues 355 to 367 are compositionally biased toward low complexity; the sequence is PGAPAPASSATTP. T366 is modified (phosphothreonine). The segment covering 368 to 381 has biased composition (polar residues); the sequence is VSLAQPTRLSSALP. A compositionally biased stretch (pro residues) spans 382–401; sequence PQTPGPRALPRPAPPGPGPG. The residue at position 412 (S412) is a Phosphoserine. Residues 427–468 are disordered; it reads QQLPAPGRPALAAKFPTATLSTRARNPLEPWRDPPPSTEQPA. At S475 the chain carries Phosphoserine. The interval 498–522 is disordered; it reads SWAPPQERSRAPLPPGNQDPAATPT.

Belongs to the DCP1 family. In terms of assembly, interacts with DCP1A.

Its subcellular location is the cytoplasm. It is found in the nucleus. It catalyses the reaction a 5'-end (N(7)-methyl 5'-triphosphoguanosine)-ribonucleoside in mRNA + H2O = N(7)-methyl-GDP + a 5'-end phospho-ribonucleoside in mRNA + 2 H(+). Its function is as follows. May play a role in the degradation of mRNAs, both in normal mRNA turnover and in nonsense-mediated mRNA decay. May remove the 7-methyl guanine cap structure from mRNA molecules, yielding a 5'-phosphorylated mRNA fragment and 7m-GDP. The sequence is that of mRNA-decapping enzyme 1B (DCP1B) from Bos taurus (Bovine).